Here is a 206-residue protein sequence, read N- to C-terminus: GTP cyclohydrolase 1 (206 aa).

Zn(2+)-binding residues include C95, H98, and C166.

It belongs to the GTP cyclohydrolase I family. As to quaternary structure, toroid-shaped homodecamer, composed of two pentamers of five dimers.

It catalyses the reaction GTP + H2O = 7,8-dihydroneopterin 3'-triphosphate + formate + H(+). It functions in the pathway cofactor biosynthesis; 7,8-dihydroneopterin triphosphate biosynthesis; 7,8-dihydroneopterin triphosphate from GTP: step 1/1. This is GTP cyclohydrolase 1 from Bartonella quintana (strain Toulouse) (Rochalimaea quintana).